Reading from the N-terminus, the 64-residue chain is Large ribosomal subunit protein bL33c (64 aa).

The protein belongs to the bacterial ribosomal protein bL33 family.

Its subcellular location is the plastid. It is found in the cyanelle. The protein is Large ribosomal subunit protein bL33c (rpl33) of Cyanophora paradoxa.